The sequence spans 321 residues: MSVNLDGSEEKMELKKHVPYILNGELYRIEKQVGDNVTVKCCYCPPDRIYRGSVRSTGNFHMHIKRRHSSLLGKLHEMKVAALEERRDRIMKNRRFAKSRKKAPVAVAATSTAAQSDSGVFVDMQAAVPSGNESHELKIKTVFQRHKQEQEGATRKLEDSTSDKANLPNIPKNLGIVVQNVSNISVETLPGGSTPASVSFLGRPVKPEQGSGPSFLADQPAAIDLSQVPPVQGESKSSGSLASSMEDVSMEYSRSQALSQSLSMAHFLEHPQRDVLQRLERSMAQISQELHCRNRIEHNRMLLEAAKFKFLNPNFQFEPNL.

Coiled coils occupy residues 74–103 (KLHEMKVAALEERRDRIMKNRRFAKSRKKA) and 147–167 (KQEQEGATRKLEDSTSDKANL). Positions 146–162 (HKQEQEGATRKLEDSTS) are enriched in basic and acidic residues. 2 disordered regions span residues 146–166 (HKQEQEGATRKLEDSTSDKAN) and 227–248 (QVPPVQGESKSSGSLASSMEDV). The segment covering 235–244 (SKSSGSLASS) has biased composition (low complexity). Residues 272 to 292 (QRDVLQRLERSMAQISQELHC) are a coiled coil.

Germ cells specific. Expressed in all germ cells. During the first instar larvae, it is expressed in all germ cells of both sexes. In third instar larvae, it decreases in male germ cells while it remains in female germ cells. In adult ovary, it is expressed in cells of the germarium, including the stem cells. In the early previtellogenic stages, it is highly expressed in the nurse cells. During vitellogenesis, it is not translocated into the maturing egg. In testes, it is only expressed during some steps of male germline differentiation. At the apex testis, it is expressed at low level in stem cells and dividing spermatogonia, while in newly formed 16-cell cysts of primary spermatocytes, it is transiently but strongly expressed before vanishing during spermatocyte growth phase.

The protein resides in the nucleus. Essential in the female germline for proper survival, sex determination and differentiation. Participates in the transcriptional activation of Otu. Does not regulate the expression of Ovo. The chain is Protein stand still (stil) from Drosophila melanogaster (Fruit fly).